The primary structure comprises 307 residues: Pantothenate kinase (307 aa).

ATP is bound at residue 90–97 (GSVAVGKS).

The protein belongs to the prokaryotic pantothenate kinase family.

It localises to the cytoplasm. The enzyme catalyses (R)-pantothenate + ATP = (R)-4'-phosphopantothenate + ADP + H(+). The protein operates within cofactor biosynthesis; coenzyme A biosynthesis; CoA from (R)-pantothenate: step 1/5. This is Pantothenate kinase from Levilactobacillus brevis (strain ATCC 367 / BCRC 12310 / CIP 105137 / JCM 1170 / LMG 11437 / NCIMB 947 / NCTC 947) (Lactobacillus brevis).